Here is a 481-residue protein sequence, read N- to C-terminus: METMPNWLMQRAFLTPDRTAIEIEEEKVTFMQLHEKVVSVCEHLTHIGVKRGQKVAVLMKNGMEMITVIHALSYVGAVAVLLNTRLSREELLWQMDDAEVICLVTDQDFDAKDIPVYSFAEVMNGPKEEASIQEEFSLEEAMTIIYTSGTTGKPKGVILTYGNHWASAVGSSLNLGLRDDDCWLACMPMFHVGGLSLLMKNIMYGMRILLVPKYDADFIHKALQTRGVTIISVVSKMLTDLLERLGAETYPSSLRCMLLGGGPAPKPLLETCVEKGIPVYQTYGMTETSSQICTLSADYMLTKVGSAGKPLFQCQLRIEKDGVVVPAFTEGEIVVKGPNVTGGYFNREDATRETIQNGWLHTGDIGYLDEEGFLYVLDRRSDLIISGGENIYPAQIEEVLLSHPAVAEAGVVGMTDDKWGQVPVAFVVKSGEVTEEEIIHFCEAKLAKYKVPKKACFLEELPRNASKKLLRRELRQLVEEM.

Belongs to the ATP-dependent AMP-binding enzyme family. MenE subfamily.

It catalyses the reaction 2-succinylbenzoate + ATP + CoA = 2-succinylbenzoyl-CoA + AMP + diphosphate. The protein operates within quinol/quinone metabolism; 1,4-dihydroxy-2-naphthoate biosynthesis; 1,4-dihydroxy-2-naphthoate from chorismate: step 5/7. Its pathway is quinol/quinone metabolism; menaquinone biosynthesis. Its function is as follows. Converts 2-succinylbenzoate (OSB) to 2-succinylbenzoyl-CoA (OSB-CoA). The polypeptide is 2-succinylbenzoate--CoA ligase (Bacillus cereus (strain ATCC 10987 / NRS 248)).